The following is a 382-amino-acid chain: Transforming growth factor beta-1 proprotein (382 aa).

A signal peptide spans 1 to 21; the sequence is MEVLWMLLVLLVLHLSSLAMS. Residues 22–65 are straightjacket domain; sequence LSTCKAVDMEEVRKRRIEAIRGQILSKLKLDKTPDVDSEKMTVP. Positions 66–263 are arm domain; it reads SEAIFLYNST…SMPAERIDTV (198 aa). Residues asparagine 73, asparagine 123, and asparagine 166 are each glycosylated (N-linked (GlcNAc...) asparagine). Residues 218 to 242 are bowtie tail; the sequence is PTPQAKDIDIEGFPALRGDLASLSS. Residues 234–236 carry the Cell attachment site motif; sequence RGD. 4 disulfides stabilise this stretch: cysteine 277/cysteine 286, cysteine 285/cysteine 348, cysteine 314/cysteine 379, and cysteine 318/cysteine 381.

This sequence belongs to the TGF-beta family. As to quaternary structure, latency-associated peptide: Homodimer; disulfide-linked. Latency-associated peptide: Interacts with Transforming growth factor beta-1 (TGF-beta-1) chain; interaction is non-covalent and maintains (TGF-beta-1) in a latent state; each Latency-associated peptide (LAP) monomer interacts with TGF-beta-1 in the other monomer. Transforming growth factor beta-1: Homodimer; disulfide-linked. Transforming growth factor beta-1: Interacts with TGF-beta receptors (tgfbr1 and tgfbr2), leading to signal transduction. Post-translationally, transforming growth factor beta-1 proprotein: The precursor proprotein is cleaved in the Golgi apparatus to form Transforming growth factor beta-1 (TGF-beta-1) and Latency-associated peptide (LAP) chains, which remain non-covalently linked, rendering TGF-beta-1 inactive.

The protein resides in the secreted. It is found in the extracellular space. Its subcellular location is the extracellular matrix. Functionally, transforming growth factor beta-1 proprotein: Precursor of the Latency-associated peptide (LAP) and Transforming growth factor beta-1 (TGF-beta-1) chains, which constitute the regulatory and active subunit of TGF-beta-1, respectively. Its function is as follows. Required to maintain the Transforming growth factor beta-1 (TGF-beta-1) chain in a latent state during storage in extracellular matrix. Associates non-covalently with TGF-beta-1 and regulates its activation via interaction with 'milieu molecules', such as LTBP1, LRRC32/GARP and LRRC33/NRROS, that control activation of TGF-beta-1. Interaction with integrins (ITGAV:ITGB6 or ITGAV:ITGB8) results in distortion of the Latency-associated peptide chain and subsequent release of the active TGF-beta-1. In terms of biological role, transforming growth factor beta-1: Multifunctional protein that regulates the growth and differentiation of various cell types and is involved in various processes, such as normal development, immune function, microglia function and responses to neurodegeneration. Activation into mature form follows different steps: following cleavage of the proprotein in the Golgi apparatus, Latency-associated peptide (LAP) and Transforming growth factor beta-1 (TGF-beta-1) chains remain non-covalently linked rendering TGF-beta-1 inactive during storage in extracellular matrix. At the same time, LAP chain interacts with 'milieu molecules', such as ltbp1, lrrc32/garp and lrrc33/nrros that control activation of TGF-beta-1 and maintain it in a latent state during storage in extracellular milieus. TGF-beta-1 is released from LAP by integrins (ITGAV:ITGB6 or ITGAV:ITGB8): integrin-binding to LAP stabilizes an alternative conformation of the LAP bowtie tail and results in distortion of the LAP chain and subsequent release of the active TGF-beta-1. Once activated following release of LAP, TGF-beta-1 acts by binding to TGF-beta receptors (tgfbr1 and tgfbr2), which transduce signal. While expressed by many cells types, TGF-beta-1 only has a very localized range of action within cell environment thanks to fine regulation of its activation by Latency-associated peptide chain (LAP) and 'milieu molecules'. Plays an important role in bone remodeling: acts as a potent stimulator of osteoblastic bone formation. Can promote either T-helper 17 cells (Th17) or regulatory T-cells (Treg) lineage differentiation in a concentration-dependent manner. Can induce epithelial-to-mesenchymal transition (EMT) and cell migration in various cell types. This chain is Transforming growth factor beta-1 proprotein (tgfb1), found in Xenopus laevis (African clawed frog).